A 475-amino-acid chain; its full sequence is Eukaryotic translation initiation factor 2 subunit 3 (475 aa).

In terms of domain architecture, tr-type G spans 38-247; it reads QATINIGTIG…IVNKIPVPPR (210 aa). The segment at 47 to 54 is G1; that stretch reads GHVAHGKS. Residue 50–55 coordinates GTP; that stretch reads AHGKST. Positions 75 to 79 are G2; the sequence is NITIK. The interval 133 to 136 is G3; the sequence is DCPG. Residues 189–192 and 224–226 each bind GTP; these read NKID and SAQ. The interval 189 to 192 is G4; sequence NKID. The G5 stretch occupies residues 224–226; the sequence is SAQ. Positions 456–468 are interacts with CDC123; that stretch reads GQIFGGKTITPVL.

The protein belongs to the TRAFAC class translation factor GTPase superfamily. Classic translation factor GTPase family. EIF2G subfamily. As to quaternary structure, eukaryotic translation initiation factor 2 eIF2 is a heterotrimeric complex composed of an alpha, a beta and a gamma subunit. The factors eIF-1, eIF-2, eIF-3, TIF5/eIF-5 and methionyl-tRNAi form a multifactor complex (MFC) that may bind to the 40S ribosome.

The protein resides in the cytoplasm. The protein localises to the cytosol. It catalyses the reaction GTP + H2O = GDP + phosphate + H(+). As a subunit of eukaryotic initiation factor 2 eIF2, involved in the early steps of protein synthesis. In the presence of GTP, eIF-2 forms a ternary complex with initiator tRNA Met-tRNAi and then recruits the 40S ribosomal complex and initiation factors eIF-1, eIF-1A and eIF-3 to form the 43S pre-initiation complex (43S PIC), a step that determines the rate of protein translation. The 43S PIC binds to mRNA and scans downstream to the initiation codon, where it forms a 48S initiation complex by codon-anticodon base pairing. This leads to the displacement of eIF-1 to allow GTPase-activating protein (GAP) eIF-5-mediated hydrolysis of eIF2-bound GTP. Hydrolysis of GTP and release of Pi, which makes GTP hydrolysis irreversible, causes the release of the eIF-2-GDP binary complex from the 40S subunit, an event that is essential for the subsequent joining of the 60S ribosomal subunit to form an elongation-competent 80S ribosome. In order for eIF-2 to recycle and catalyze another round of initiation, the GDP bound to eIF-2 must be exchanged with GTP by way of a reaction catalyzed by GDP-GTP exchange factor (GEF) eIF-2B. The sequence is that of Eukaryotic translation initiation factor 2 subunit 3 from Drosophila melanogaster (Fruit fly).